The primary structure comprises 370 residues: Phosphoserine aminotransferase (370 aa).

Met1 carries the N-acetylmethionine modification. Residues His44 and Arg45 each coordinate O-phospho-L-serine. N6-acetyllysine is present on Lys51. Pyridoxal 5'-phosphate contacts are provided by Gly79, Cys80, and Trp107. Lys127 carries the N6-acetyllysine modification. Pyridoxal 5'-phosphate contacts are provided by Thr156, Asp176, and Gln199. Lys200 bears the N6-(pyridoxal phosphate)lysine mark. Pyridoxal 5'-phosphate-binding residues include Asn241 and Thr242. N6-acetyllysine occurs at positions 269, 318, and 323. Ser331 bears the Phosphoserine mark. Position 333 is an N6-acetyllysine (Lys333). O-phospho-L-serine-binding residues include His335, Arg336, and Arg342.

This sequence belongs to the class-V pyridoxal-phosphate-dependent aminotransferase family. SerC subfamily. As to quaternary structure, homodimer. Pyridoxal 5'-phosphate is required as a cofactor. As to expression, expressed at high levels in the brain, liver, kidney and pancreas, and very weakly expressed in the thymus, prostate, testis and colon.

The catalysed reaction is O-phospho-L-serine + 2-oxoglutarate = 3-phosphooxypyruvate + L-glutamate. It participates in amino-acid biosynthesis; L-serine biosynthesis; L-serine from 3-phospho-D-glycerate: step 2/3. With respect to regulation, phosphoserine transaminase activity is strongly stimulated by increasing the ionic strength. Involved in L-serine biosynthesis via the phosphorylated pathway, a three-step pathway converting the glycolytic intermediate 3-phospho-D-glycerate into L-serine. Catalyzes the second step, that is the pyridoxal 5'-phosphate-dependent transamination of 3-phosphohydroxypyruvate and L-glutamate to O-phosphoserine (OPS) and alpha-ketoglutarate. The protein is Phosphoserine aminotransferase of Homo sapiens (Human).